A 158-amino-acid polypeptide reads, in one-letter code: Transcription elongation factor GreA (158 aa).

A coiled-coil region spans residues 4 to 75 (QKQYPMTQEG…QRVENMLRNA (72 aa)).

This sequence belongs to the GreA/GreB family.

Its function is as follows. Necessary for efficient RNA polymerase transcription elongation past template-encoded arresting sites. The arresting sites in DNA have the property of trapping a certain fraction of elongating RNA polymerases that pass through, resulting in locked ternary complexes. Cleavage of the nascent transcript by cleavage factors such as GreA or GreB allows the resumption of elongation from the new 3'terminus. GreA releases sequences of 2 to 3 nucleotides. The polypeptide is Transcription elongation factor GreA (Staphylococcus saprophyticus subsp. saprophyticus (strain ATCC 15305 / DSM 20229 / NCIMB 8711 / NCTC 7292 / S-41)).